We begin with the raw amino-acid sequence, 255 residues long: 4-hydroxy-tetrahydrodipicolinate reductase (255 aa).

Residues 9–14 (GFKGKM), 89–91 (GTT), and 115–118 (APNF) contribute to the NAD(+) site. His145 functions as the Proton donor/acceptor in the catalytic mechanism. A (S)-2,3,4,5-tetrahydrodipicolinate-binding site is contributed by His146. Residue Lys149 is the Proton donor of the active site. Residue 155 to 156 (GT) coordinates (S)-2,3,4,5-tetrahydrodipicolinate.

This sequence belongs to the DapB family.

It localises to the cytoplasm. The enzyme catalyses (S)-2,3,4,5-tetrahydrodipicolinate + NAD(+) + H2O = (2S,4S)-4-hydroxy-2,3,4,5-tetrahydrodipicolinate + NADH + H(+). The catalysed reaction is (S)-2,3,4,5-tetrahydrodipicolinate + NADP(+) + H2O = (2S,4S)-4-hydroxy-2,3,4,5-tetrahydrodipicolinate + NADPH + H(+). The protein operates within amino-acid biosynthesis; L-lysine biosynthesis via DAP pathway; (S)-tetrahydrodipicolinate from L-aspartate: step 4/4. In terms of biological role, catalyzes the conversion of 4-hydroxy-tetrahydrodipicolinate (HTPA) to tetrahydrodipicolinate. In Streptococcus gordonii (strain Challis / ATCC 35105 / BCRC 15272 / CH1 / DL1 / V288), this protein is 4-hydroxy-tetrahydrodipicolinate reductase.